A 508-amino-acid chain; its full sequence is Lysine--tRNA ligase (508 aa).

Mg(2+)-binding residues include Glu-416 and Glu-423.

The protein belongs to the class-II aminoacyl-tRNA synthetase family. Homodimer. Requires Mg(2+) as cofactor.

It is found in the cytoplasm. It carries out the reaction tRNA(Lys) + L-lysine + ATP = L-lysyl-tRNA(Lys) + AMP + diphosphate. The polypeptide is Lysine--tRNA ligase (Prochlorococcus marinus (strain MIT 9313)).